The primary structure comprises 229 residues: DNA mismatch repair protein MutH (229 aa).

The protein belongs to the MutH family.

Its subcellular location is the cytoplasm. Sequence-specific endonuclease that cleaves unmethylated GATC sequences. It is involved in DNA mismatch repair. The protein is DNA mismatch repair protein MutH of Escherichia coli (strain K12 / MC4100 / BW2952).